The following is a 57-amino-acid chain: Myrmicitoxin(1)-Pm7a (57 aa).

The signal sequence occupies residues 1 to 23 (MMKIIYAFLLIAVVAFMGSGIMA). Positions 24–31 (EPLAEAIA) are excised as a propeptide.

This sequence belongs to the formicidae venom clade 4 family. In terms of tissue distribution, expressed by the venom gland.

The protein resides in the secreted. Probable neurotoxin. This chain is Myrmicitoxin(1)-Pm7a, found in Pogonomyrmex maricopa (Maricopa harvester ant).